The following is a 135-amino-acid chain: Large ribosomal subunit protein uL18 (135 aa).

Positions 1–23 (MAQTQADTAARKPVGQSVSATRR) are disordered.

This sequence belongs to the universal ribosomal protein uL18 family. As to quaternary structure, part of the 50S ribosomal subunit; part of the 5S rRNA/L5/L18/L25 subcomplex. Contacts the 5S and 23S rRNAs.

Its function is as follows. This is one of the proteins that bind and probably mediate the attachment of the 5S RNA into the large ribosomal subunit, where it forms part of the central protuberance. The sequence is that of Large ribosomal subunit protein uL18 from Mycobacterium marinum (strain ATCC BAA-535 / M).